The sequence spans 111 residues: Glutaredoxin-C2 (111 aa).

Residues Met3–Ala103 form the Glutaredoxin domain. A disulfide bridge connects residues Cys23 and Cys26.

Belongs to the glutaredoxin family. CPYC subfamily.

It localises to the cytoplasm. Has a glutathione-disulfide oxidoreductase activity in the presence of NADPH and glutathione reductase. Reduces low molecular weight disulfides and proteins. In Arabidopsis thaliana (Mouse-ear cress), this protein is Glutaredoxin-C2 (GRXC2).